Here is a 152-residue protein sequence, read N- to C-terminus: UPF0225 protein YchJ (152 aa).

It belongs to the UPF0225 family.

In Escherichia coli O139:H28 (strain E24377A / ETEC), this protein is UPF0225 protein YchJ.